Consider the following 346-residue polypeptide: Dihydroorotase (346 aa).

Positions 13 and 15 each coordinate Zn(2+). Substrate contacts are provided by residues His-15–Arg-17 and Asn-41. Zn(2+)-binding residues include Lys-99, His-136, and His-174. Lys-99 carries the post-translational modification N6-carboxylysine. His-136 is a binding site for substrate. Leu-219 is a binding site for substrate. Asp-247 provides a ligand contact to Zn(2+). Asp-247 is a catalytic residue. The substrate site is built by His-251 and Ala-263.

It belongs to the metallo-dependent hydrolases superfamily. DHOase family. Class II DHOase subfamily. As to quaternary structure, homodimer. Zn(2+) serves as cofactor.

It catalyses the reaction (S)-dihydroorotate + H2O = N-carbamoyl-L-aspartate + H(+). It participates in pyrimidine metabolism; UMP biosynthesis via de novo pathway; (S)-dihydroorotate from bicarbonate: step 3/3. In terms of biological role, catalyzes the reversible cyclization of carbamoyl aspartate to dihydroorotate. This is Dihydroorotase from Chelativorans sp. (strain BNC1).